The sequence spans 496 residues: Lysosomal Pro-X carboxypeptidase (496 aa).

A signal peptide spans 1–21; it reads MGRRALLLLLLSFLAPWATIA. Positions 22–45 are excised as a propeptide; sequence LRPALRALGSLHLPTNPTSLPAVA. N-linked (GlcNAc...) asparagine glycans are attached at residues Asn47 and Asn101. Catalysis depends on Ser179, which acts as the Charge relay system. The segment at 194 to 334 is SKS domain; that stretch reads HMVVGALAAS…QNIFQALNVY (141 aa). Cystine bridges form between Cys215-Cys372, Cys233-Cys310, Cys264-Cys343, and Cys364-Cys394. Asn317, Asn336, and Asn345 each carry an N-linked (GlcNAc...) asparagine glycan. A glycan (N-linked (GlcNAc...) asparagine) is linked at Asn415. Catalysis depends on charge relay system residues Asp430 and His455.

The protein belongs to the peptidase S28 family. In terms of assembly, homodimer. Highest levels in placenta, lung and liver. Also present in heart, brain, pancreas and kidney.

The protein resides in the lysosome. The enzyme catalyses Cleavage of a -Pro-|-Xaa bond to release a C-terminal amino acid.. In terms of biological role, cleaves C-terminal amino acids linked to proline in peptides such as angiotensin II, III and des-Arg9-bradykinin. This cleavage occurs at acidic pH, but enzymatic activity is retained with some substrates at neutral pH. This Homo sapiens (Human) protein is Lysosomal Pro-X carboxypeptidase (PRCP).